The sequence spans 353 residues: Farnesyl pyrophosphate synthase (353 aa).

Isopentenyl diphosphate-binding residues include Lys-57, Arg-60, and Gln-96. N6-(2-hydroxyisobutyryl)lysine; alternate is present on Lys-57. Position 57 is an N6-acetyllysine; alternate (Lys-57). Mg(2+) contacts are provided by Asp-103 and Asp-107. Dimethylallyl diphosphate is bound at residue Arg-112. An isopentenyl diphosphate-binding site is contributed by Arg-113. The dimethylallyl diphosphate site is built by Lys-200, Thr-201, Gln-240, Lys-257, and Lys-266.

The protein belongs to the FPP/GGPP synthase family. In terms of assembly, homodimer. Interacts with RSAD2. Mg(2+) is required as a cofactor.

Its subcellular location is the cytoplasm. It carries out the reaction isopentenyl diphosphate + dimethylallyl diphosphate = (2E)-geranyl diphosphate + diphosphate. The catalysed reaction is isopentenyl diphosphate + (2E)-geranyl diphosphate = (2E,6E)-farnesyl diphosphate + diphosphate. It functions in the pathway isoprenoid biosynthesis; farnesyl diphosphate biosynthesis; farnesyl diphosphate from geranyl diphosphate and isopentenyl diphosphate: step 1/1. It participates in isoprenoid biosynthesis; geranyl diphosphate biosynthesis; geranyl diphosphate from dimethylallyl diphosphate and isopentenyl diphosphate: step 1/1. Inactivated by interferon-induced RSAD2. This inactivation may result of disruption of lipid rafts at the plasma membrane, and thus have an antiviral effect since many enveloped viruses need lipid rafts to bud efficiently out of the cell. In terms of biological role, key enzyme in isoprenoid biosynthesis which catalyzes the formation of farnesyl diphosphate (FPP), a precursor for several classes of essential metabolites including sterols, dolichols, carotenoids, and ubiquinones. FPP also serves as substrate for protein farnesylation and geranylgeranylation. Catalyzes the sequential condensation of isopentenyl pyrophosphate with the allylic pyrophosphates, dimethylallyl pyrophosphate, and then with the resultant geranylpyrophosphate to the ultimate product farnesyl pyrophosphate. This chain is Farnesyl pyrophosphate synthase (Fdps), found in Mus musculus (Mouse).